A 447-amino-acid chain; its full sequence is Tubulin beta chain (447 aa).

Residues Gln11, Glu69, Ser138, Gly142, Thr143, Gly144, Asn204, and Asn226 each coordinate GTP. Glu69 is a binding site for Mg(2+).

The protein belongs to the tubulin family. Dimer of alpha and beta chains. A typical microtubule is a hollow water-filled tube with an outer diameter of 25 nm and an inner diameter of 15 nM. Alpha-beta heterodimers associate head-to-tail to form protofilaments running lengthwise along the microtubule wall with the beta-tubulin subunit facing the microtubule plus end conferring a structural polarity. Microtubules usually have 13 protofilaments but different protofilament numbers can be found in some organisms and specialized cells. Mg(2+) is required as a cofactor.

Its subcellular location is the cytoplasm. It is found in the cytoskeleton. Functionally, tubulin is the major constituent of microtubules, a cylinder consisting of laterally associated linear protofilaments composed of alpha- and beta-tubulin heterodimers. Microtubules grow by the addition of GTP-tubulin dimers to the microtubule end, where a stabilizing cap forms. Below the cap, tubulin dimers are in GDP-bound state, owing to GTPase activity of alpha-tubulin. The polypeptide is Tubulin beta chain (TUB2) (Penicillium digitatum (Green mold)).